The sequence spans 431 residues: Adenylosuccinate synthetase (431 aa).

GTP-binding positions include 13-19 (GDEGKGK) and 41-43 (GHT). The active-site Proton acceptor is the aspartate 14. Mg(2+) is bound by residues aspartate 14 and glycine 41. IMP contacts are provided by residues 14 to 17 (DEGK), 39 to 42 (NAGH), threonine 130, arginine 144, glutamine 225, threonine 240, and arginine 304. Residue histidine 42 is the Proton donor of the active site. 300–306 (AVTGRPR) is a substrate binding site. Residues arginine 306, 332–334 (KLD), and 415–417 (STG) each bind GTP.

This sequence belongs to the adenylosuccinate synthetase family. Homodimer. Mg(2+) is required as a cofactor.

It is found in the cytoplasm. The enzyme catalyses IMP + L-aspartate + GTP = N(6)-(1,2-dicarboxyethyl)-AMP + GDP + phosphate + 2 H(+). It functions in the pathway purine metabolism; AMP biosynthesis via de novo pathway; AMP from IMP: step 1/2. In terms of biological role, plays an important role in the de novo pathway of purine nucleotide biosynthesis. Catalyzes the first committed step in the biosynthesis of AMP from IMP. This chain is Adenylosuccinate synthetase, found in Legionella pneumophila (strain Lens).